A 504-amino-acid chain; its full sequence is Flavin-dependent halogenase armH3 (504 aa).

Positions 16, 19, 49, and 149 each coordinate FAD. Residues S329 and G330 each coordinate chloride. I331 contributes to the FAD binding site. The disordered stretch occupies residues 444-475 (NNLRTPVDTGAADVKAKHAPSETDAQNPLQSM).

This sequence belongs to the flavin-dependent halogenase family.

The catalysed reaction is melleolide F + FADH2 + chloride + O2 = 6'-chloromelleolide F + FAD + 2 H2O + H(+). Functionally, flavin-dependent halogenase involved in the biosynthesis of melleolides, a range of antifungal and phytotoxic polyketide derivatives composed of an orsellinic acid (OA) moiety esterified to various sesquiterpene alcohols. The halogenase catalyzes the transfer of a single chlorine atom to the melleolide backbone, resulting in a 6'-chloromelleolide product. The enzyme acts on free substrate and does not depend on carrier-protein-dependent acceptor molecules. The protein is Flavin-dependent halogenase armH3 of Armillaria mellea (Honey mushroom).